The following is an 833-amino-acid chain: Translation initiation factor IF-2 (833 aa).

In terms of domain architecture, tr-type G spans 331 to 501; that stretch reads TRAPVVTVMG…LLIAEMQDLK (171 aa). The G1 stretch occupies residues 340-347; it reads GHVDHGKT. Position 340–347 (340–347) interacts with GTP; the sequence is GHVDHGKT. A G2 region spans residues 365–369; sequence GITQH. Residues 387-390 are G3; it reads DTPG. GTP contacts are provided by residues 387–391 and 441–444; these read DTPGH and NKID. A G4 region spans residues 441-444; it reads NKID. Residues 477-479 form a G5 region; it reads SAL.

The protein belongs to the TRAFAC class translation factor GTPase superfamily. Classic translation factor GTPase family. IF-2 subfamily.

Its subcellular location is the cytoplasm. One of the essential components for the initiation of protein synthesis. Protects formylmethionyl-tRNA from spontaneous hydrolysis and promotes its binding to the 30S ribosomal subunits. Also involved in the hydrolysis of GTP during the formation of the 70S ribosomal complex. This chain is Translation initiation factor IF-2, found in Rickettsia canadensis (strain McKiel).